Here is a 62-residue protein sequence, read N- to C-terminus: ATP synthase subunit K, mitochondrial (62 aa).

Residues 14-30 traverse the membrane as a helical segment; it reads HHLAIATIGTVVALVAP.

As to quaternary structure, F-type ATP synthases have 2 components, the catalytic core F(1) and the membrane-embedded component F(0), linked together by a central stalk and a peripheral stalk. The central stalk, also called rotor shaft, is often seen as part of F(1). The peripheral stalk is seen as part of F(0). F(0) contains the membrane channel next to the rotor. F-type ATP synthases form dimers but each monomer functions independently in ATP generation. The dimer consists of 18 different polypeptides: ATP1 (subunit alpha, part of F(1), 3 molecules per monomer), ATP2 (subunit beta, part of F(1), 3 molecules per monomer), ATP3 (subunit gamma, part of the central stalk), ATP4 (subunit b, part of the peripheral stalk), ATP5/OSCP (subunit 5/OSCP, part of the peripheral stalk), ATP6 (subunit a, part of the peripheral stalk), ATP7 (subunit d, part of the peripheral stalk), ATP8 (subunit 8, part of the peripheral stalk), OLI1 (subunit c, part of the rotor, 10 molecules per monomer), ATP14 (subunit h, part of the peripheral stalk), ATP15 (subunit epsilon, part of the central stalk), ATP16 (subunit delta, part of the central stalk), ATP17 (subunit f, part of the peripheral stalk), ATP18 (subunit i/j, part of the peripheral stalk). Dimer-specific subunits are ATP19 (subunit k, at interface between monomers), ATP20 (subunit g, at interface between monomers), TIM11 (subunit e, at interface between monomers). Also contains subunit L.

It localises to the mitochondrion inner membrane. In terms of biological role, mitochondrial membrane ATP synthase (F(1)F(0) ATP synthase or Complex V) produces ATP from ADP in the presence of a proton gradient across the membrane which is generated by electron transport complexes of the respiratory chain. F-type ATP synthases consist of two structural domains, F(1) - containing the extramembraneous catalytic core, and F(0) - containing the membrane proton channel, linked together by a central stalk and a peripheral stalk. During catalysis, ATP synthesis in the catalytic domain of F(1) is coupled via a rotary mechanism of the central stalk subunits to proton translocation. Part of the complex F(0) domain. Minor subunit located with subunit a/ATP6 in the membrane. The K chain binds the dimeric form by interacting with the G and E chains. This Pichia angusta (Yeast) protein is ATP synthase subunit K, mitochondrial.